The sequence spans 141 residues: Small ribosomal subunit protein uS12 (141 aa).

This sequence belongs to the universal ribosomal protein uS12 family. Part of the 30S ribosomal subunit.

In terms of biological role, with S4 and S5 plays an important role in translational accuracy. Located at the interface of the 30S and 50S subunits. The sequence is that of Small ribosomal subunit protein uS12 from Methanothermobacter thermautotrophicus (strain ATCC 29096 / DSM 1053 / JCM 10044 / NBRC 100330 / Delta H) (Methanobacterium thermoautotrophicum).